The primary structure comprises 827 residues: Leucine--tRNA ligase (827 aa).

The 'HIGH' region motif lies at 42–52; sequence PYPSGKLHMGH. A 'KMSKS' region motif is present at residues 583–587; it reads KMSKS. K586 contributes to the ATP binding site.

Belongs to the class-I aminoacyl-tRNA synthetase family.

The protein localises to the cytoplasm. It carries out the reaction tRNA(Leu) + L-leucine + ATP = L-leucyl-tRNA(Leu) + AMP + diphosphate. The polypeptide is Leucine--tRNA ligase (Pelotomaculum thermopropionicum (strain DSM 13744 / JCM 10971 / SI)).